A 77-amino-acid chain; its full sequence is DNA-directed RNA polymerase subunit Rpo10 (77 aa).

The Zn(2+) site is built by cysteine 7, cysteine 10, cysteine 44, and cysteine 45.

The protein belongs to the archaeal Rpo10/eukaryotic RPB10 RNA polymerase subunit family. As to quaternary structure, part of the RNA polymerase complex. It depends on Zn(2+) as a cofactor.

It localises to the cytoplasm. It carries out the reaction RNA(n) + a ribonucleoside 5'-triphosphate = RNA(n+1) + diphosphate. Its function is as follows. DNA-dependent RNA polymerase (RNAP) catalyzes the transcription of DNA into RNA using the four ribonucleoside triphosphates as substrates. This chain is DNA-directed RNA polymerase subunit Rpo10, found in Aeropyrum pernix (strain ATCC 700893 / DSM 11879 / JCM 9820 / NBRC 100138 / K1).